The primary structure comprises 163 residues: Shikimate kinase (163 aa).

10–15 provides a ligand contact to ATP; sequence GVGKTT. Thr-14 provides a ligand contact to Mg(2+). 3 residues coordinate substrate: Asp-28, Arg-52, and Gly-75. Residue Arg-116 coordinates ATP. Arg-134 lines the substrate pocket. Arg-151 is a binding site for ATP.

Belongs to the shikimate kinase family. Monomer. It depends on Mg(2+) as a cofactor.

Its subcellular location is the cytoplasm. The catalysed reaction is shikimate + ATP = 3-phosphoshikimate + ADP + H(+). Its pathway is metabolic intermediate biosynthesis; chorismate biosynthesis; chorismate from D-erythrose 4-phosphate and phosphoenolpyruvate: step 5/7. In terms of biological role, catalyzes the specific phosphorylation of the 3-hydroxyl group of shikimic acid using ATP as a cosubstrate. The polypeptide is Shikimate kinase (Streptococcus pyogenes serotype M4 (strain MGAS10750)).